The primary structure comprises 274 residues: Phloretin hydrolase (274 aa).

The Zn(2+) site is built by His-123, Glu-154, His-251, and Glu-255.

It belongs to the DAPG/phloretin hydrolase family. Homodimer. Zn(2+) serves as cofactor.

It is found in the cytoplasm. The enzyme catalyses phloretin + H2O = phloretate + 1,3,5-trihydroxybenzene + H(+). Its function is as follows. Catalyzes the hydrolytic C-C cleavage of phloretin to phloroglucinol and 3-(4-hydroxyphenyl)propionic acid during flavonoid degradation. Also hydrolyzes other C-acylated phenols. The sequence is that of Phloretin hydrolase (phy) from Eubacterium ramulus.